The following is a 108-amino-acid chain: Protein RnfH (108 aa).

The protein belongs to the UPF0125 (RnfH) family.

In Laribacter hongkongensis (strain HLHK9), this protein is Protein RnfH.